A 145-amino-acid polypeptide reads, in one-letter code: Small ribosomal subunit protein bS16 (145 aa).

Residues I82–A145 are disordered. The span at E95–A115 shows a compositional bias: basic and acidic residues. A compositionally biased stretch (low complexity) spans E116–A137.

It belongs to the bacterial ribosomal protein bS16 family.

The chain is Small ribosomal subunit protein bS16 from Novosphingobium aromaticivorans (strain ATCC 700278 / DSM 12444 / CCUG 56034 / CIP 105152 / NBRC 16084 / F199).